Here is a 275-residue protein sequence, read N- to C-terminus: Large ribosomal subunit protein uL2 (275 aa).

The interval 225 to 275 is disordered; sequence MNPIDHPHGGGEGRTSGGRHPVTPWGKPTKGKKTRSNKKTDRLIMRRRQTQ.

Belongs to the universal ribosomal protein uL2 family. As to quaternary structure, part of the 50S ribosomal subunit. Forms a bridge to the 30S subunit in the 70S ribosome.

Its function is as follows. One of the primary rRNA binding proteins. Required for association of the 30S and 50S subunits to form the 70S ribosome, for tRNA binding and peptide bond formation. It has been suggested to have peptidyltransferase activity; this is somewhat controversial. Makes several contacts with the 16S rRNA in the 70S ribosome. The chain is Large ribosomal subunit protein uL2 from Paramagnetospirillum magneticum (strain ATCC 700264 / AMB-1) (Magnetospirillum magneticum).